Reading from the N-terminus, the 193-residue chain is Serine recombinase gin (193 aa).

The Resolvase/invertase-type recombinase catalytic domain occupies 1–134 (MLIGYVRVST…AGLAAARNKG (134 aa)). S9 (O-(5'-phospho-DNA)-serine intermediate) is an active-site residue. The segment at residues 138–183 (GRPPKLTKAEWEQAGRLLAQGIPRKQVALIYDVALSTLYKKHPAKR) is a DNA-binding region (H-T-H motif).

This sequence belongs to the site-specific recombinase resolvase family. In terms of assembly, homodimer. During inversion, two dimers associate to form a homotetramer.

The protein resides in the host cytoplasm. Its function is as follows. Performs inversion of a viral 3 kp segment (G-segment) that encodes two alternate pairs of tail fiber proteins thereby modifying the host specificity of the virus. Binds as a dimer to the viral gix sites which are 34-bp palindromic sequences that flank the invertible G-segment. Catalyzes site-specific recombination in the presence of the host factor Fis. Gin dimers bound to each of the gix sites and host factor Fis bound to the enhancer come together to form the synaptic complex. Each Gin monomer introduces a nick and becomes covalently attached to the 5'-phosphate of the DNA, resulting in double-stranded staggered breaks at both recombination sites. A 180 degrees rotation of one of the two Gin dimers followed by religation of the DNA leads to the inversion of the G-segment (G+ or G- orientation). This Escherichia phage Mu (Bacteriophage Mu) protein is Serine recombinase gin (gin).